A 283-amino-acid chain; its full sequence is Non-selective voltage-gated ion channel VDAC3 (283 aa).

The residue at position 2 (C2) is an N-acetylcysteine. At T4 the chain carries Phosphothreonine. K12, K15, and K20 each carry N6-acetyllysine. 2 beta stranded membrane passes run 26–35 (MVKIDLKTKS) and 39–47 (VEFSTSGHA). A Glycyl lysine isopeptide (Lys-Gly) (interchain with G-Cter in ubiquitin) cross-link involves residue K53. The next 3 membrane-spanning stretches (beta stranded) occupy residues 54-64 (ASGNLETKYKV), 69-76 (LTFTQKWN), and 80-89 (TLGTEISWEN). At K90 the chain carries N6-acetyllysine. A beta stranded transmembrane segment spans residues 95-104 (LKLTLDTIFV). Glycyl lysine isopeptide (Lys-Gly) (interchain with G-Cter in ubiquitin) cross-links involve residues K109 and K110. 10 consecutive transmembrane segments (beta stranded) span residues 111-120 (SGKLKASYRR), 123-130 (FSLGSNVD), 137-145 (TIYGWAVLA), 150-158 (LAGYQMSFD), 163-175 (KLSQ…GYKA), 178-185 (FQLHTHVN), 189-198 (EFGGSIYQKV), 202-211 (IETSINLAWT), 218-227 (RFGIAAKYKL), and 231-238 (TSLSAKVN). S241 carries the phosphoserine modification. NAD(+)-binding positions include 242 to 244 (LIG) and 260 to 264 (SALID). 2 beta stranded membrane-spanning segments follow: residues 242 to 251 (LIGLGYTQTL) and 254 to 263 (GVKLTLSALI). At K266 the chain carries N6-acetyllysine; alternate. A Glycyl lysine isopeptide (Lys-Gly) (interchain with G-Cter in ubiquitin); alternate cross-link involves residue K266. A beta stranded transmembrane segment spans residues 273–282 (HKVGLGFELE).

It belongs to the eukaryotic mitochondrial porin family. Interacts with ARMC12 in a TBC1D21-dependent manner. Interacts with MISFA. Post-translationally, ubiquitinated by PRKN during mitophagy, leading to its degradation and enhancement of mitophagy. Deubiquitinated by USP30. In terms of tissue distribution, highest levels of expression detected in testis, less but still abundant expression in heart, kidney, brain, and skeletal muscle.

The protein resides in the mitochondrion outer membrane. It is found in the membrane. It catalyses the reaction chloride(in) = chloride(out). The catalysed reaction is K(+)(in) = K(+)(out). Non-selective voltage-gated ion channel that mediates the transport of anions and cations through the mitochondrion outer membrane and plasma membrane. Forms a high-conducting channel with a stable open state and a voltage-induced closure with a mild preference for anions over cations. Involved in male fertility and sperm mitochondrial sheath formation. In Mus musculus (Mouse), this protein is Non-selective voltage-gated ion channel VDAC3.